Reading from the N-terminus, the 548-residue chain is Chaperonin GroEL 1 (548 aa).

ATP-binding positions include 30-33, K51, 87-91, G415, 479-481, and D495; these read TLGP, DGTTT, and NAA.

It belongs to the chaperonin (HSP60) family. As to quaternary structure, forms a cylinder of 14 subunits composed of two heptameric rings stacked back-to-back. Interacts with the co-chaperonin GroES.

Its subcellular location is the cytoplasm. It catalyses the reaction ATP + H2O + a folded polypeptide = ADP + phosphate + an unfolded polypeptide.. In terms of biological role, together with its co-chaperonin GroES, plays an essential role in assisting protein folding. The GroEL-GroES system forms a nano-cage that allows encapsulation of the non-native substrate proteins and provides a physical environment optimized to promote and accelerate protein folding. The chain is Chaperonin GroEL 1 from Vibrio harveyi (Beneckea harveyi).